Reading from the N-terminus, the 451-residue chain is Chaperone SurA (451 aa).

An N-terminal signal peptide occupies residues 1 to 26 (MKKIIPTNLFKLISILFILTPFFAWS). PpiC domains lie at 179–280 (DVEY…QLQG) and 290–388 (KQYH…FLDG).

The protein localises to the periplasm. The catalysed reaction is [protein]-peptidylproline (omega=180) = [protein]-peptidylproline (omega=0). Functionally, chaperone involved in the correct folding and assembly of outer membrane proteins. Recognizes specific patterns of aromatic residues and the orientation of their side chains, which are found more frequently in integral outer membrane proteins. May act in both early periplasmic and late outer membrane-associated steps of protein maturation. The polypeptide is Chaperone SurA (Hydrogenovibrio crunogenus (strain DSM 25203 / XCL-2) (Thiomicrospira crunogena)).